Consider the following 651-residue polypeptide: Sodium/potassium/calcium exchanger 2 (651 aa).

The Cytoplasmic portion of the chain corresponds to 1–38; sequence MALCKKTVGSVLEEWCLNEPLFGCKRHQNVRKKLRLIR. The chain crosses the membrane as a helical span at residues 39–59; sequence IIGLLVSVVAISTFSLSISAF. Topologically, residues 60–134 are extracellular; it reads FKMETHSTVL…DLFSLEERRK (75 aa). The segment at 92 to 123 is disordered; it reads QNEGSTPDSPTSMKHEAEHDNATEEHSKGEYP. Residues 93-103 are compositionally biased toward polar residues; that stretch reads NEGSTPDSPTS. Positions 104 to 122 are enriched in basic and acidic residues; that stretch reads MKHEAEHDNATEEHSKGEY. Asn-112 carries an N-linked (GlcNAc...) asparagine glycan. Residues 135-155 traverse the membrane as a helical segment; it reads GAVILHVIGMIYMFIALAIVC. Over 156 to 179 the chain is Cytoplasmic; sequence DEFFVPSLTVITEKLSISDDVAGA. Residues 176-216 form an Alpha-1 repeat; that stretch reads VAGATFMAAGGSAPELFTSLIGVFISHSNVGIGTIVGSAVF. Residues 180 to 200 traverse the membrane as a helical segment; it reads TFMAAGGSAPELFTSLIGVFI. Residues 201–206 are Extracellular-facing; that stretch reads SHSNVG. The chain crosses the membrane as a helical span at residues 207 to 227; the sequence is IGTIVGSAVFNILFVIGMCAL. Over 228–245 the chain is Cytoplasmic; sequence FSREILNLTWWPLFRDVS. A helical membrane pass occupies residues 246 to 266; sequence FYIVDLILLIIFFLDNLIMWW. At 267–459 the chain is on the extracellular side; the sequence is ESLTLLTAYF…SLAWPDTPRK (193 aa). A compositionally biased stretch (basic and acidic residues) spans 304–322; sequence ATTGDAEGKSPTAGDKDDQ. The disordered stretch occupies residues 304–338; sequence ATTGDAEGKSPTAGDKDDQTLTTKPRLQRGGSSAS. The span at 323 to 338 shows a compositional bias: polar residues; that stretch reads TLTTKPRLQRGGSSAS. Residues 460–480 traverse the membrane as a helical segment; that stretch reads QLTYLLVLPIVFPLWVSLPDV. Residues 481 to 487 lie on the Cytoplasmic side of the membrane; sequence RNPRSRK. A helical membrane pass occupies residues 488-508; sequence FFPITFFGSISWIAFFSYLMV. Topologically, residues 509-523 are extracellular; sequence WWAHQVGETIGISEE. Residues 524–544 traverse the membrane as a helical segment; that stretch reads IMGLTILAAGTSIPDLITSVI. The stretch at 531–562 is one Alpha-2 repeat; the sequence is AAGTSIPDLITSVIVARKGLGDMAVSSSVGSN. Topologically, residues 545 to 562 are cytoplasmic; sequence VARKGLGDMAVSSSVGSN. Residues 563-583 traverse the membrane as a helical segment; sequence IFDITVGLPLPWLLYAVINNF. At 584 to 592 the chain is on the extracellular side; sequence SPVTVSSNG. Residues 593–613 traverse the membrane as a helical segment; it reads LFCAIVLLFIMLLFVILSIAF. Residues 614–620 are Cytoplasmic-facing; sequence CKWRMNK. Residues 621-641 form a helical membrane-spanning segment; it reads FLGFLMFGLYFVFLIVSVLLE. Residues 642-651 are Extracellular-facing; the sequence is DKVIQCPVSI.

Belongs to the Ca(2+):cation antiporter (CaCA) (TC 2.A.19) family. SLC24A subfamily. In terms of tissue distribution, retinal cones. Found in the cone inner segment layer and in a subpopulation of ganglion cells.

The protein resides in the cell membrane. The enzyme catalyses Ca(2+)(out) + K(+)(out) + 4 Na(+)(in) = Ca(2+)(in) + K(+)(in) + 4 Na(+)(out). In terms of biological role, calcium, potassium:sodium antiporter that transports 1 Ca(2+) and 1 K(+) in exchange for 4 Na(+). Required for learming and memory by regulating neuronal Ca(2+), which is essential for the development of synaptic plasticity. The protein is Sodium/potassium/calcium exchanger 2 (SLC24A2) of Gallus gallus (Chicken).